Reading from the N-terminus, the 618-residue chain is Putative ATP-dependent DNA helicase Q1 (618 aa).

One can recognise a Helicase ATP-binding domain in the interval 95–270 (INAVMSKEDA…KKMLGIPVAI (176 aa)). 108–115 (LSTGGGKS) serves as a coordination point for ATP. A DEVH box motif is present at residues 214–217 (DEVH). Residues 295 to 443 (CVEKIVRTIK…NLYNMVRYAS (149 aa)) form the Helicase C-terminal domain. Zn(2+) is bound by residues Cys-448, Cys-466, Cys-470, and Cys-473. Residues 586 to 618 (KGRAEENNRKRKAAVTSSDEEVDVGDDDDVITL) form a disordered region. The span at 603-618 (SDEEVDVGDDDDVITL) shows a compositional bias: acidic residues.

Belongs to the helicase family. RecQ subfamily. Zn(2+) is required as a cofactor.

It is found in the nucleus. The enzyme catalyses Couples ATP hydrolysis with the unwinding of duplex DNA by translocating in the 3'-5' direction.. The catalysed reaction is ATP + H2O = ADP + phosphate + H(+). Functionally, DNA helicase that may play a role in the repair of DNA that is damaged by ultraviolet light or other mutagens. Exhibits a magnesium-dependent ATP-dependent DNA-helicase activity that unwinds single- and double-stranded DNA in a 3'-5' direction. The polypeptide is Putative ATP-dependent DNA helicase Q1 (Caenorhabditis briggsae).